Here is a 340-residue protein sequence, read N- to C-terminus: Guanine nucleotide-binding protein subunit beta-4 (340 aa).

Residue serine 2 is modified to N-acetylserine. A Phosphoserine modification is found at serine 2. WD repeat units lie at residues 53–92 (GHLA…KMHA), 95–134 (LRSS…GNVR), 141–179 (GHTG…QTTT), 182–221 (GHSG…CRQS), and 224–263 (GHIS…ELLL). Histidine 266 is subject to Phosphohistidine. WD repeat units follow at residues 268–307 (NIIC…RAGV) and 310–339 (GHDN…LRIW).

Belongs to the WD repeat G protein beta family. In terms of assembly, g proteins are composed of 3 units, alpha, beta and gamma. As to expression, widely expressed in the brain. Highest levels found in the hippocampus and layers v and vi of the neocortex.

In terms of biological role, guanine nucleotide-binding proteins (G proteins) are involved as a modulator or transducer in various transmembrane signaling systems. The beta and gamma chains are required for the GTPase activity, for replacement of GDP by GTP, and for G protein-effector interaction. The protein is Guanine nucleotide-binding protein subunit beta-4 (Gnb4) of Rattus norvegicus (Rat).